The following is a 251-amino-acid chain: Phosphoribosylaminoimidazole-succinocarboxamide synthase (251 aa).

It belongs to the SAICAR synthetase family.

The catalysed reaction is 5-amino-1-(5-phospho-D-ribosyl)imidazole-4-carboxylate + L-aspartate + ATP = (2S)-2-[5-amino-1-(5-phospho-beta-D-ribosyl)imidazole-4-carboxamido]succinate + ADP + phosphate + 2 H(+). It functions in the pathway purine metabolism; IMP biosynthesis via de novo pathway; 5-amino-1-(5-phospho-D-ribosyl)imidazole-4-carboxamide from 5-amino-1-(5-phospho-D-ribosyl)imidazole-4-carboxylate: step 1/2. The sequence is that of Phosphoribosylaminoimidazole-succinocarboxamide synthase from Phenylobacterium zucineum (strain HLK1).